The primary structure comprises 292 residues: uncharacterized protein (292 aa).

The protein belongs to the glycosyltransferase 2 family. WaaE/KdtX subfamily.

This is an uncharacterized protein from Rickettsia prowazekii (strain Madrid E).